Reading from the N-terminus, the 29-residue chain is DEQTGSKGPNENLPSQKDLXAKASXLTEV.

Over residues 1–15 (DEQTGSKGPNENLPS) the composition is skewed to polar residues. A disordered region spans residues 1–29 (DEQTGSKGPNENLPSQKDLXAKASXLTEV).

It localises to the secreted. The protein resides in the nematocyst. Its subcellular location is the target cell membrane. Its function is as follows. Pore-forming toxin that lyses bovine erythrocytes at nanomolar concentrations. Is devoid of enzymatic activity. Binds to monolayers and efficiently permeabilizes small lipid vesicles composed of sphingomyelin and cholesterol. The cytolytic activity is not prevented by cholesterol or sphingomyelin. This chain is Cytolysin Uc-1, found in Urticina crassicornis (Mottled anemone).